The following is a 616-amino-acid chain: FAD-linked oxidoreductase cheF (616 aa).

Residues 160 to 344 enclose the FAD-binding PCMH-type domain; sequence NQGLVSPWYV…LSMTVRVEPA (185 aa).

It belongs to the oxygen-dependent FAD-linked oxidoreductase family. FAD is required as a cofactor.

The protein operates within secondary metabolite biosynthesis. Its function is as follows. FAD-linked oxidoreductase; part of the gene cluster that mediates the biosynthesis of chaetoglobosin A which has a unique inhibitory activity against actin polymerization in mammalian cells. Chaetoglobosin A and its intermediates are involved in the morphological differentiation of C.globosum. The first step of the pathway is the synthesis of prochaetoglobosin I via condensation of one acetyl-CoA, 8 malonyl-CoA, and a L-tryptophan molecule by the PKS-NRPS hybrid synthetase cheA, followed by reduction of backbone double bond to install desired geometry by the enoyl reductase cheB. Further multiple oxidation steps performed by the cytochrome P450 monooxygenases cheE and cheG, as well as by the FAD-linked oxidoreductase cheF, lead to the formation of chaetoglobosin A. Depending on the order of action of these reductases, distinct intermediates can be identified. Within the pathway, the cytochrome P450 monooxygenase cheE catalyzes a stereospecific epoxidation on prochaetoglobosin I, cytoglobosin D, and chaetoglobosin J intermediates. The FAD-linked oxidoreductase cheF performs dehydrogenation of the C-20 hydroxyl groups in the 20-dihyrochaetoglobosin A and cytoglobosin D intermediates. Finally, the cytochrome P450 monooxygenase cheG can catalyze the stereospecific dihydroxylation of prochaetoglobosin I and prochaetoglobosin IV at C-19 and C-20, respectively. The Diels-Alderase cheD may play a role in the post-PKS-NRPS biosynthetic steps catalyzing Diels-Alder cyclization. In Chaetomium globosum (strain ATCC 6205 / CBS 148.51 / DSM 1962 / NBRC 6347 / NRRL 1970) (Soil fungus), this protein is FAD-linked oxidoreductase cheF.